Reading from the N-terminus, the 290-residue chain is uncharacterized protein (290 aa).

A run of 7 helical transmembrane segments spans residues 40-60 (MHVILLSALFYQIINILSPVI), 80-100 (DAHVVSSVQSIVLICLGYTCL), 110-130 (LFGYSVVAGDIYALTAGYFVW), 139-159 (VHITGIGFVIHAIAALFVITF), 166-188 (MYYGPTYLSWELSTPFLNIHYFL), 200-220 (MINGFILIVTFICVRIAWGWF), and 238-260 (WALSLFYLAANMSLNCLNLFWVS). The 198-residue stretch at 74-271 (KTRLNWDAHV…MIDAIRRRAH (198 aa)) folds into the TLC domain.

It is found in the endoplasmic reticulum membrane. This is an uncharacterized protein from Schizosaccharomyces pombe (strain 972 / ATCC 24843) (Fission yeast).